The following is a 219-amino-acid chain: 7-cyano-7-deazaguanine synthase (219 aa).

Residue F10–L20 participates in ATP binding. Residues C188, C196, C199, and C202 each coordinate Zn(2+).

The protein belongs to the QueC family. Zn(2+) is required as a cofactor.

The enzyme catalyses 7-carboxy-7-deazaguanine + NH4(+) + ATP = 7-cyano-7-deazaguanine + ADP + phosphate + H2O + H(+). Its pathway is purine metabolism; 7-cyano-7-deazaguanine biosynthesis. Its function is as follows. Catalyzes the ATP-dependent conversion of 7-carboxy-7-deazaguanine (CDG) to 7-cyano-7-deazaguanine (preQ(0)). The protein is 7-cyano-7-deazaguanine synthase of Neisseria meningitidis serogroup A / serotype 4A (strain DSM 15465 / Z2491).